A 443-amino-acid chain; its full sequence is Threonine/serine transporter TdcC (443 aa).

11 consecutive transmembrane segments (helical) span residues 22–42 (TTWT…FFPI), 44–64 (AGFG…PIAF), 97–117 (GVVI…IYGV), 140–160 (FVAL…KDLM), 163–183 (VMSY…LSLI), 207–227 (ILVT…FSPI), 261–281 (MLMV…LSPA), 319–339 (ASII…LGTL), 366–386 (ISMI…PNIL), 389–409 (IEAM…MYAI), and 423–443 (DNVF…YKLF).

This sequence belongs to the amino acid/polyamine transporter 2 family. SdaC/TdcC subfamily.

Its subcellular location is the cell inner membrane. It carries out the reaction L-threonine(in) + H(+)(in) = L-threonine(out) + H(+)(out). It catalyses the reaction L-serine(in) + H(+)(in) = L-serine(out) + H(+)(out). Involved in the import of threonine and serine into the cell, with the concomitant import of a proton (symport system). This Citrobacter koseri (strain ATCC BAA-895 / CDC 4225-83 / SGSC4696) protein is Threonine/serine transporter TdcC.